Reading from the N-terminus, the 201-residue chain is 3-isopropylmalate dehydratase small subunit (201 aa).

The protein belongs to the LeuD family. LeuD type 1 subfamily. As to quaternary structure, heterodimer of LeuC and LeuD.

The enzyme catalyses (2R,3S)-3-isopropylmalate = (2S)-2-isopropylmalate. The protein operates within amino-acid biosynthesis; L-leucine biosynthesis; L-leucine from 3-methyl-2-oxobutanoate: step 2/4. Catalyzes the isomerization between 2-isopropylmalate and 3-isopropylmalate, via the formation of 2-isopropylmaleate. The polypeptide is 3-isopropylmalate dehydratase small subunit (Shewanella baltica (strain OS155 / ATCC BAA-1091)).